The following is a 346-amino-acid chain: N-acetyl-gamma-glutamyl-phosphate reductase (346 aa).

The active site involves Cys-149.

The protein belongs to the NAGSA dehydrogenase family. Type 1 subfamily.

The protein resides in the cytoplasm. It catalyses the reaction N-acetyl-L-glutamate 5-semialdehyde + phosphate + NADP(+) = N-acetyl-L-glutamyl 5-phosphate + NADPH + H(+). The protein operates within amino-acid biosynthesis; L-arginine biosynthesis; N(2)-acetyl-L-ornithine from L-glutamate: step 3/4. Functionally, catalyzes the NADPH-dependent reduction of N-acetyl-5-glutamyl phosphate to yield N-acetyl-L-glutamate 5-semialdehyde. This chain is N-acetyl-gamma-glutamyl-phosphate reductase, found in Oceanobacillus iheyensis (strain DSM 14371 / CIP 107618 / JCM 11309 / KCTC 3954 / HTE831).